The sequence spans 443 residues: uncharacterized protein (443 aa).

Catalysis depends on proton acceptor residues histidine 164 and aspartate 386.

This sequence belongs to the plant acyltransferase family.

This is an uncharacterized protein from Arabidopsis thaliana (Mouse-ear cress).